We begin with the raw amino-acid sequence, 141 residues long: Hemoglobin subunit alpha-1 (141 aa).

The Globin domain occupies 1-141 (VLSGSDKNNV…VGNVLTAKYR (141 aa)). Position 58 (histidine 58) interacts with O2. Heme b is bound at residue histidine 87.

This sequence belongs to the globin family. As to quaternary structure, heterotetramer of two alpha chains and two beta chains. In terms of tissue distribution, red blood cells.

Its function is as follows. Involved in oxygen transport from the lung to the various peripheral tissues. This chain is Hemoglobin subunit alpha-1, found in Stercorarius maccormicki (South polar skua).